The chain runs to 356 residues: D-alanine--D-alanine ligase (356 aa).

The region spanning 134 to 339 (KQLFEHRGLP…YPELITKLIE (206 aa)) is the ATP-grasp domain. 167–222 (NDKLNYPVFVKPANLGSSVGISKCNNEAELKEGIKEAFQFDRKLVIEQGVNAREIE) lines the ATP pocket. Mg(2+) contacts are provided by Asp-293, Glu-306, and Asn-308.

It belongs to the D-alanine--D-alanine ligase family. Requires Mg(2+) as cofactor. Mn(2+) serves as cofactor.

The protein localises to the cytoplasm. It catalyses the reaction 2 D-alanine + ATP = D-alanyl-D-alanine + ADP + phosphate + H(+). The protein operates within cell wall biogenesis; peptidoglycan biosynthesis. In terms of biological role, cell wall formation. The polypeptide is D-alanine--D-alanine ligase (Staphylococcus aureus (strain Mu3 / ATCC 700698)).